A 944-amino-acid polypeptide reads, in one-letter code: Neutral alpha-glucosidase AB (944 aa).

Positions 1 to 32 are cleaved as a signal peptide; the sequence is MAAIAAVAARRRRSWLSLVLAYLGVCLGITLA. Cys-41 and Cys-47 form a disulfide bridge. A Phosphoserine modification is found at Ser-52. The N-linked (GlcNAc...) asparagine glycan is linked to Asn-97. The interval 180-238 is disordered; sequence HQRAPRVPQESKDPAEGNGAQPEATPGDGDKPEETQEKAEKDEPGAWEETFKTHSDSKP. Residues 207 to 236 are compositionally biased toward basic and acidic residues; sequence DGDKPEETQEKAEKDEPGAWEETFKTHSDS. Substrate is bound by residues Asp-283 and Asp-429. Asp-542 acts as the Nucleophile in catalysis. Arg-602 provides a ligand contact to substrate. Asp-618 serves as the catalytic Proton donor. A disulfide bond links Cys-633 and Cys-644. His-676 lines the substrate pocket.

Belongs to the glycosyl hydrolase 31 family. In terms of assembly, heterodimer of a catalytic alpha subunit (GANAB) and a beta subunit (PRKCSH). Binds glycosylated PTPRC.

The protein resides in the endoplasmic reticulum. It localises to the golgi apparatus. The protein localises to the melanosome. It catalyses the reaction N(4)-(alpha-D-Glc-(1-&gt;3)-alpha-D-Man-(1-&gt;2)-alpha-D-Man-(1-&gt;2)-alpha-D-Man-(1-&gt;3)-[alpha-D-Man-(1-&gt;2)-alpha-D-Man-(1-&gt;3)-[alpha-D-Man-(1-&gt;2)-alpha-D-Man-(1-&gt;6)]-alpha-D-Man-(1-&gt;6)]-beta-D-Man-(1-&gt;4)-beta-D-GlcNAc-(1-&gt;4)-beta-D-GlcNAc)-L-asparaginyl-[protein] + H2O = N(4)-(alpha-D-Man-(1-&gt;2)-alpha-D-Man-(1-&gt;2)-alpha-D-Man-(1-&gt;3)-[alpha-D-Man-(1-&gt;2)-alpha-D-Man-(1-&gt;3)-[alpha-D-Man-(1-&gt;2)-alpha-D-Man-(1-&gt;6)]-alpha-D-Man-(1-&gt;6)]-beta-D-Man-(1-&gt;4)-beta-D-GlcNAc-(1-&gt;4)-beta-D-GlcNAc)-L-asparaginyl-[protein] (N-glucan mannose isomer 9A1,2,3B1,2,3) + beta-D-glucose. It carries out the reaction N(4)-(alpha-D-Glc-(1-&gt;3)-alpha-D-Glc-(1-&gt;3)-alpha-D-Man-(1-&gt;2)-alpha-D-Man-(1-&gt;2)-alpha-D-Man-(1-&gt;3)-[alpha-D-Man-(1-&gt;2)-alpha-D-Man-(1-&gt;3)-[alpha-D-Man-(1-&gt;2)-alpha-D-Man-(1-&gt;6)]-alpha-D-Man-(1-&gt;6)]-beta-D-Man-(1-&gt;4)-beta-D-GlcNAc-(1-&gt;4)-beta-D-GlcNAc)-L-asparaginyl-[protein] + H2O = N(4)-(alpha-D-Glc-(1-&gt;3)-alpha-D-Man-(1-&gt;2)-alpha-D-Man-(1-&gt;2)-alpha-D-Man-(1-&gt;3)-[alpha-D-Man-(1-&gt;2)-alpha-D-Man-(1-&gt;3)-[alpha-D-Man-(1-&gt;2)-alpha-D-Man-(1-&gt;6)]-alpha-D-Man-(1-&gt;6)]-beta-D-Man-(1-&gt;4)-beta-D-GlcNAc-(1-&gt;4)-beta-D-GlcNAc)-L-asparaginyl-[protein] + beta-D-glucose. The protein operates within glycan metabolism; N-glycan metabolism. Its function is as follows. Catalytic subunit of glucosidase II that cleaves sequentially the 2 innermost alpha-1,3-linked glucose residues from the Glc(2)Man(9)GlcNAc(2) oligosaccharide precursor of immature glycoproteins. Required for PKD1/Polycystin-1 and PKD2/Polycystin-2 maturation and localization to the cell surface and cilia. The sequence is that of Neutral alpha-glucosidase AB from Mus musculus (Mouse).